A 418-amino-acid polypeptide reads, in one-letter code: Glutamyl-tRNA reductase (418 aa).

Substrate-binding positions include 57 to 60 (TCNR), serine 113, 118 to 120 (DFE), and glutamine 124. Cysteine 58 (nucleophile) is an active-site residue. Residue 193–198 (GTGKIG) participates in NADP(+) binding.

It belongs to the glutamyl-tRNA reductase family. Homodimer.

The enzyme catalyses (S)-4-amino-5-oxopentanoate + tRNA(Glu) + NADP(+) = L-glutamyl-tRNA(Glu) + NADPH + H(+). It functions in the pathway porphyrin-containing compound metabolism; protoporphyrin-IX biosynthesis; 5-aminolevulinate from L-glutamyl-tRNA(Glu): step 1/2. Its function is as follows. Catalyzes the NADPH-dependent reduction of glutamyl-tRNA(Glu) to glutamate 1-semialdehyde (GSA). The sequence is that of Glutamyl-tRNA reductase from Christiangramia forsetii (strain DSM 17595 / CGMCC 1.15422 / KT0803) (Gramella forsetii).